A 531-amino-acid polypeptide reads, in one-letter code: Light-independent protochlorophyllide reductase subunit B (531 aa).

Asp-36 is a [4Fe-4S] cluster binding site. Asp-287 (proton donor) is an active-site residue. 422–423 (GL) contacts substrate.

This sequence belongs to the ChlB/BchB/BchZ family. In terms of assembly, protochlorophyllide reductase is composed of three subunits; BchL, BchN and BchB. Forms a heterotetramer of two BchB and two BchN subunits. It depends on [4Fe-4S] cluster as a cofactor.

It carries out the reaction chlorophyllide a + oxidized 2[4Fe-4S]-[ferredoxin] + 2 ADP + 2 phosphate = protochlorophyllide a + reduced 2[4Fe-4S]-[ferredoxin] + 2 ATP + 2 H2O. Its pathway is porphyrin-containing compound metabolism; bacteriochlorophyll biosynthesis (light-independent). Component of the dark-operative protochlorophyllide reductase (DPOR) that uses Mg-ATP and reduced ferredoxin to reduce ring D of protochlorophyllide (Pchlide) to form chlorophyllide a (Chlide). This reaction is light-independent. The NB-protein (BchN-BchB) is the catalytic component of the complex. The polypeptide is Light-independent protochlorophyllide reductase subunit B (Rhodopseudomonas palustris (strain BisA53)).